The sequence spans 1257 residues: Neural cell adhesion molecule L1 (1257 aa).

The N-terminal stretch at 1–19 is a signal peptide; that stretch reads MVVALRYVWPLLLCSPCLL. The Extracellular segment spans residues 20–1120; sequence IQIPEEYEGH…RLPPAGFATE (1101 aa). 6 consecutive Ig-like C2-type domains span residues 35 to 125, 139 to 226, 240 to 328, 333 to 420, 425 to 507, and 518 to 607; these read PVIT…TAMS, PKET…EPID, PRLL…YYVT, PYWL…AYIY, PAKI…NNVT, and TQIT…AQLL. Disulfide bonds link C57-C114 and C158-C209. 4 N-linked (GlcNAc...) asparagine glycosylation sites follow: N100, N203, N247, and N294. Intrachain disulfides connect C264–C312 and C354–C404. 4 N-linked (GlcNAc...) asparagine glycosylation sites follow: N433, N479, N490, and N505. An intrachain disulfide couples C448 to C497. C539 and C591 are oxidised to a cystine. The short motif at 554–556 is the Cell attachment site element; sequence RGD. 2 N-linked (GlcNAc...) asparagine glycosylation sites follow: N588 and N671. Fibronectin type-III domains follow at residues 615–712, 717–810, 814–916, 920–1015, and 1016–1115; these read VPRL…TPEA, NPVD…SGED, AIPE…TPEG, HPEA…MALS, and GISD…LPPA. Residues 698–725 form a disordered region; sequence GEPSPVSETVVTPEAAPEKNPVDVKGEG. Basic and acidic residues predominate over residues 713–725; sequence APEKNPVDVKGEG. N-linked (GlcNAc...) asparagine glycosylation is found at N726, N777, N825, N849, N876, N979, N1022, N1030, N1071, and N1105. The chain crosses the membrane as a helical span at residues 1121–1143; the sequence is GWFIGFVSAIILLLLVLLILCFI. The Cytoplasmic segment spans residues 1144 to 1257; the sequence is KRSKGGKYSV…SPINPAVALE (114 aa). Phosphoserine occurs at positions 1163, 1172, 1177, and 1178. Basic and acidic residues predominate over residues 1176–1187; sequence YRSLESDNEEKA. Disordered regions lie at residues 1176-1207 and 1226-1257; these read YRSLESDNEEKAFGSSQPSLNGDIKPLGSDDS and IGQYSGKKEKEAAGGNDSSGATSPINPAVALE. S1181 is modified (phosphoserine; by CaMK2). S1194, S1243, S1244, and S1248 each carry phosphoserine. A compositionally biased stretch (polar residues) spans 1241-1250; sequence NDSSGATSPI.

It belongs to the immunoglobulin superfamily. L1/neurofascin/NgCAM family. As to quaternary structure, interacts with SHTN1; the interaction occurs in axonal growth cones. Interacts with isoform 2 of BSG.

The protein localises to the cell membrane. Its subcellular location is the cell projection. It is found in the growth cone. It localises to the axon. The protein resides in the dendrite. In terms of biological role, neural cell adhesion molecule involved in the dynamics of cell adhesion and in the generation of transmembrane signals at tyrosine kinase receptors. During brain development, critical in multiple processes, including neuronal migration, axonal growth and fasciculation, and synaptogenesis. In the mature brain, plays a role in the dynamics of neuronal structure and function, including synaptic plasticity. This is Neural cell adhesion molecule L1 (L1CAM) from Homo sapiens (Human).